The sequence spans 162 residues: Cyanate hydratase (162 aa).

Residues Arg-103, Glu-106, and Ser-129 contribute to the active site.

This sequence belongs to the cyanase family.

It catalyses the reaction cyanate + hydrogencarbonate + 3 H(+) = NH4(+) + 2 CO2. In terms of biological role, catalyzes the reaction of cyanate with bicarbonate to produce ammonia and carbon dioxide. In Pyrenophora tritici-repentis (strain Pt-1C-BFP) (Wheat tan spot fungus), this protein is Cyanate hydratase.